A 603-amino-acid chain; its full sequence is Elongation factor 4 (603 aa).

The tr-type G domain occupies 9–191 (SNIRNFSIIA…RIVRQIPPPK (183 aa)). GTP contacts are provided by residues 21 to 26 (DHGKST) and 138 to 141 (NKID).

It belongs to the TRAFAC class translation factor GTPase superfamily. Classic translation factor GTPase family. LepA subfamily.

It is found in the cell inner membrane. It carries out the reaction GTP + H2O = GDP + phosphate + H(+). Functionally, required for accurate and efficient protein synthesis under certain stress conditions. May act as a fidelity factor of the translation reaction, by catalyzing a one-codon backward translocation of tRNAs on improperly translocated ribosomes. Back-translocation proceeds from a post-translocation (POST) complex to a pre-translocation (PRE) complex, thus giving elongation factor G a second chance to translocate the tRNAs correctly. Binds to ribosomes in a GTP-dependent manner. This chain is Elongation factor 4, found in Idiomarina loihiensis (strain ATCC BAA-735 / DSM 15497 / L2-TR).